The primary structure comprises 812 residues: Probable inorganic carbon transporter subunit DabA (812 aa).

4 residues coordinate Zn(2+): cysteine 337, aspartate 339, histidine 499, and cysteine 514.

The protein belongs to the inorganic carbon transporter (TC 9.A.2) DabA family. In terms of assembly, forms a complex with DabB. Requires Zn(2+) as cofactor.

It localises to the cell inner membrane. Functionally, part of an energy-coupled inorganic carbon pump. The protein is Probable inorganic carbon transporter subunit DabA of Xanthomonas oryzae pv. oryzae (strain KACC10331 / KXO85).